A 501-amino-acid chain; its full sequence is LIM domain-containing protein HDR3 (501 aa).

Residues 33–67 (GEANRRRPRVTAGEETTLWEEPVRPKKEEPPRHNN) are disordered. A compositionally biased stretch (basic and acidic residues) spans 53–67 (EPVRPKKEEPPRHNN). 2 consecutive UIM domains span residues 65 to 84 (HNNEEMDHALALALADDAKN) and 94 to 113 (ENDEELARAIQDSLNMNPYQ). An LIM zinc-binding domain is found at 131–191 (RVCGGCKHEI…KLCYKELHHP (61 aa)). Residues 429 to 448 (YASSSSSSCRPPPSKKGGIS) are disordered.

In terms of assembly, interacts (via N-terminus) with GW6A (via C-terminus).

Functionally, ubiquitin receptor that functions as a positive regulator of grain size and weight. Functions in the same genetic pathway as GW6A to regulate grain size. Modulates grain size in a similar manner to GW6A, by altering cell proliferation in spikelet hulls. Interacts with and enhances the ubiquitination of GW6A. This stabilizes GW6A, delays protein degradation by the 26S proteasome and enhances GW6A histone acetyltransferase activity. The polypeptide is LIM domain-containing protein HDR3 (Oryza sativa subsp. japonica (Rice)).